The chain runs to 78 residues: Large ribosomal subunit protein bL31 (78 aa).

4 residues coordinate Zn(2+): cysteine 16, cysteine 18, cysteine 38, and cysteine 41.

This sequence belongs to the bacterial ribosomal protein bL31 family. Type A subfamily. In terms of assembly, part of the 50S ribosomal subunit. The cofactor is Zn(2+).

Its function is as follows. Binds the 23S rRNA. The chain is Large ribosomal subunit protein bL31 from Parafrankia sp. (strain EAN1pec).